A 221-amino-acid chain; its full sequence is Eukaryotic translation initiation factor NCBP (221 aa).

Belongs to the eukaryotic initiation factor 4E family. EIF4F is a multi-subunit complex, the composition of which varies with external and internal environmental conditions. It is composed of at least EIF4A, EIF4E and EIF4G. EIF4E is also known to interact with other partners. In higher plants two isoforms of EIF4F have been identified, named isoform EIF4F and isoform EIF(iso)4F. Isoform EIF4F has subunits p220 and p26, whereas isoform EIF(iso)4F has subunits p82 and p28.

Recognizes and binds the 7-methylguanosine-containing mRNA cap during an early step in the initiation of protein synthesis and facilitates ribosome binding by inducing the unwinding of the mRNAs secondary structures. In Arabidopsis thaliana (Mouse-ear cress), this protein is Eukaryotic translation initiation factor NCBP (NCBP).